The sequence spans 563 residues: Membrane protein insertase YidC (563 aa).

A helical transmembrane segment spans residues T6–H26. The disordered stretch occupies residues P36 to A70. The span at A54–A70 shows a compositional bias: low complexity. 4 consecutive transmembrane segments (helical) span residues W373–A393, L443–V463, P482–P502, and V512–V532.

This sequence belongs to the OXA1/ALB3/YidC family. Type 1 subfamily. As to quaternary structure, interacts with the Sec translocase complex via SecD. Specifically interacts with transmembrane segments of nascent integral membrane proteins during membrane integration.

The protein localises to the cell inner membrane. In terms of biological role, required for the insertion and/or proper folding and/or complex formation of integral membrane proteins into the membrane. Involved in integration of membrane proteins that insert both dependently and independently of the Sec translocase complex, as well as at least some lipoproteins. Aids folding of multispanning membrane proteins. This is Membrane protein insertase YidC from Bordetella parapertussis (strain 12822 / ATCC BAA-587 / NCTC 13253).